A 254-amino-acid chain; its full sequence is Urease accessory protein UreD (254 aa).

This sequence belongs to the UreD family. UreD, UreF and UreG form a complex that acts as a GTP-hydrolysis-dependent molecular chaperone, activating the urease apoprotein by helping to assemble the nickel containing metallocenter of UreC. The UreE protein probably delivers the nickel.

Its subcellular location is the cytoplasm. Required for maturation of urease via the functional incorporation of the urease nickel metallocenter. The polypeptide is Urease accessory protein UreD (Streptomyces coelicolor (strain ATCC BAA-471 / A3(2) / M145)).